The following is a 368-amino-acid chain: Putative transport protein bbp_117 (368 aa).

8 helical membrane passes run 13–35 (VIFSLVFIFIMIISSLWIMRPFF), 39–61 (AWASMVVVATWPIFLKLQILLWG), 68–90 (VMMTFSLLLVFIIPIVCLVNSLI), 159–181 (HFGRFILHLIFMLIFSALLYWNG), 216–238 (LGVVVTALVQGILSGIGLAISGI), 248–270 (IIIFCLVQLGPLPVLIPAIIWLY), 277–299 (WGTVLLIWSCVVCILDHILRPIL), and 314–336 (GVIGGLIAFGMIGLFIGPVVLII).

The protein belongs to the autoinducer-2 exporter (AI-2E) (TC 2.A.86) family.

Its subcellular location is the cell membrane. This Buchnera aphidicola subsp. Baizongia pistaciae (strain Bp) protein is Putative transport protein bbp_117.